Consider the following 206-residue polypeptide: N-(5'-phosphoribosyl)anthranilate isomerase (206 aa).

It belongs to the TrpF family.

The catalysed reaction is N-(5-phospho-beta-D-ribosyl)anthranilate = 1-(2-carboxyphenylamino)-1-deoxy-D-ribulose 5-phosphate. It functions in the pathway amino-acid biosynthesis; L-tryptophan biosynthesis; L-tryptophan from chorismate: step 3/5. The sequence is that of N-(5'-phosphoribosyl)anthranilate isomerase from Azotobacter vinelandii (strain DJ / ATCC BAA-1303).